The chain runs to 196 residues: Recombination protein RecR (196 aa).

Residues 57–72 form a C4-type zinc finger; it reads CERCHTFTQADICATC. The Toprim domain maps to 80-175; sequence SKLCVVETPA…RLTRLARGVP (96 aa).

Belongs to the RecR family.

May play a role in DNA repair. It seems to be involved in an RecBC-independent recombinational process of DNA repair. It may act with RecF and RecO. The protein is Recombination protein RecR of Albidiferax ferrireducens (strain ATCC BAA-621 / DSM 15236 / T118) (Rhodoferax ferrireducens).